Reading from the N-terminus, the 90-residue chain is Probable Fe(2+)-trafficking protein (90 aa).

This sequence belongs to the Fe(2+)-trafficking protein family.

In terms of biological role, could be a mediator in iron transactions between iron acquisition and iron-requiring processes, such as synthesis and/or repair of Fe-S clusters in biosynthetic enzymes. In Cupriavidus taiwanensis (strain DSM 17343 / BCRC 17206 / CCUG 44338 / CIP 107171 / LMG 19424 / R1) (Ralstonia taiwanensis (strain LMG 19424)), this protein is Probable Fe(2+)-trafficking protein.